The chain runs to 74 residues: Anionic peptide clone 8 (74 aa).

Positions 1 to 24 (MVSKSLIVLLLVSVLVSTFFTTEA) are cleaved as a signal peptide.

This sequence belongs to the non-disulfide-bridged peptide (NDBP) superfamily. Long chain multifunctional peptide (group 2) family. Expressed by the venom gland.

It localises to the secreted. May be an antimicrobial peptide. The protein is Anionic peptide clone 8 of Tityus costatus (Brazilian scorpion).